A 467-amino-acid chain; its full sequence is Chromosomal replication initiator protein DnaA (467 aa).

The tract at residues 1 to 90 (MSLSLWQQCL…KSVTQTPQAA (90 aa)) is domain I, interacts with DnaA modulators. Positions 91–130 (VTSNVAAPAQVAQTQPQRAAPSTRSGWDNVPAPAEPTYRS) are domain II. Positions 97-111 (APAQVAQTQPQRAAP) are enriched in low complexity. Residues 97-119 (APAQVAQTQPQRAAPSTRSGWDN) are disordered. Positions 131–347 (NVNVKHTFDN…GALNRVIANA (217 aa)) are domain III, AAA+ region. Gly175, Gly177, Lys178, and Thr179 together coordinate ATP. The segment at 348–467 (NFTGRAITID…FSNLIRTLSS (120 aa)) is domain IV, binds dsDNA.

This sequence belongs to the DnaA family. As to quaternary structure, oligomerizes as a right-handed, spiral filament on DNA at oriC.

It localises to the cytoplasm. Plays an essential role in the initiation and regulation of chromosomal replication. ATP-DnaA binds to the origin of replication (oriC) to initiate formation of the DNA replication initiation complex once per cell cycle. Binds the DnaA box (a 9 base pair repeat at the origin) and separates the double-stranded (ds)DNA. Forms a right-handed helical filament on oriC DNA; dsDNA binds to the exterior of the filament while single-stranded (ss)DNA is stabiized in the filament's interior. The ATP-DnaA-oriC complex binds and stabilizes one strand of the AT-rich DNA unwinding element (DUE), permitting loading of DNA polymerase. After initiation quickly degrades to an ADP-DnaA complex that is not apt for DNA replication. Binds acidic phospholipids. The protein is Chromosomal replication initiator protein DnaA of Escherichia coli O157:H7.